The chain runs to 658 residues: Glycogen debranching enzyme (658 aa).

Catalysis depends on aspartate 335, which acts as the Nucleophile. Glutamate 370 serves as the catalytic Proton donor. Residues 457-468 show a composition bias toward basic and acidic residues; the sequence is NDANGEGNRDGT. Residues 457-478 form a disordered region; sequence NDANGEGNRDGTDSNFSNNHGT.

The protein belongs to the glycosyl hydrolase 13 family.

The enzyme catalyses Hydrolysis of (1-&gt;6)-alpha-D-glucosidic linkages to branches with degrees of polymerization of three or four glucose residues in limit dextrin.. It participates in glycan degradation; glycogen degradation. Functionally, removes maltotriose and maltotetraose chains that are attached by 1,6-alpha-linkage to the limit dextrin main chain, generating a debranched limit dextrin. The protein is Glycogen debranching enzyme of Pectobacterium carotovorum subsp. carotovorum (strain PC1).